We begin with the raw amino-acid sequence, 248 residues long: UDP-2,3-diacylglucosamine hydrolase (248 aa).

Residues D7, H9, D40, N78, and H113 each coordinate Mn(2+). Residue 78-79 coordinates substrate; sequence NR. The substrate site is built by D121, S159, T163, K166, and H194. Mn(2+) contacts are provided by H194 and H196.

It belongs to the LpxH family. The cofactor is Mn(2+).

Its subcellular location is the cell inner membrane. The enzyme catalyses UDP-2-N,3-O-bis[(3R)-3-hydroxytetradecanoyl]-alpha-D-glucosamine + H2O = 2-N,3-O-bis[(3R)-3-hydroxytetradecanoyl]-alpha-D-glucosaminyl 1-phosphate + UMP + 2 H(+). It participates in glycolipid biosynthesis; lipid IV(A) biosynthesis; lipid IV(A) from (3R)-3-hydroxytetradecanoyl-[acyl-carrier-protein] and UDP-N-acetyl-alpha-D-glucosamine: step 4/6. In terms of biological role, hydrolyzes the pyrophosphate bond of UDP-2,3-diacylglucosamine to yield 2,3-diacylglucosamine 1-phosphate (lipid X) and UMP by catalyzing the attack of water at the alpha-P atom. Involved in the biosynthesis of lipid A, a phosphorylated glycolipid that anchors the lipopolysaccharide to the outer membrane of the cell. This is UDP-2,3-diacylglucosamine hydrolase from Pseudomonas syringae pv. syringae (strain B728a).